The primary structure comprises 432 residues: MDHSMSKKLHDEALLHIVGGVNSPSRSNKGVGGGIPVTMERASGAYFYDVDGNKYIDYLAAFGPIITGHAHPHITEAITKAAQNGVLYGTPTKHEITFAKMLKEAIPSLEKVRFTNSGTEAVMTTIRVARAYTGRDKIIKFAGCYHGHFDLVLVEAGSGPSTLGIPDSAGVTKSTAEEVITVPFNDLASFKEALAVWSDQVAAVLVEPIVGNFGMVAPEDGFLEAVNELAHANGSLVIYDEVITAFRFMYGGAQNYLGVIPDLTAMGKIIGGGLPIGAYGGRIDIMEKVAPLGPAYQAGTHAGNPASILSGIACLEVLQEEGLYERFEKYGSMLKDGIEKAALKHGIAVTVNQIVGALTVYFTEDPVTNYAEAGATNGELFGRFFKGMLEEGINLAPSKYEAWFITSAHSEADILETIQAVDTVFGKMVQDN.

N6-(pyridoxal phosphate)lysine is present on Lys-268.

Belongs to the class-III pyridoxal-phosphate-dependent aminotransferase family. HemL subfamily. As to quaternary structure, homodimer. The cofactor is pyridoxal 5'-phosphate.

The protein localises to the cytoplasm. The catalysed reaction is (S)-4-amino-5-oxopentanoate = 5-aminolevulinate. It functions in the pathway porphyrin-containing compound metabolism; protoporphyrin-IX biosynthesis; 5-aminolevulinate from L-glutamyl-tRNA(Glu): step 2/2. This Listeria monocytogenes serotype 4b (strain CLIP80459) protein is Glutamate-1-semialdehyde 2,1-aminomutase 2.